The sequence spans 177 residues: Endoribonuclease YbeY (177 aa).

Zn(2+) is bound by residues H118, H122, and H128.

This sequence belongs to the endoribonuclease YbeY family. Zn(2+) serves as cofactor.

Its subcellular location is the cytoplasm. Single strand-specific metallo-endoribonuclease involved in late-stage 70S ribosome quality control and in maturation of the 3' terminus of the 16S rRNA. This is Endoribonuclease YbeY from Mycobacterium bovis (strain ATCC BAA-935 / AF2122/97).